The following is an 886-amino-acid chain: Valine--tRNA ligase (886 aa).

The short motif at 43-53 is the 'HIGH' region element; that stretch reads PYPTGRMHLGH. The 'KMSKS' region motif lies at 528 to 532; it reads KMSKS. Lys-531 contributes to the ATP binding site.

This sequence belongs to the class-I aminoacyl-tRNA synthetase family. ValS type 2 subfamily.

The protein localises to the cytoplasm. It catalyses the reaction tRNA(Val) + L-valine + ATP = L-valyl-tRNA(Val) + AMP + diphosphate. Its function is as follows. Catalyzes the attachment of valine to tRNA(Val). As ValRS can inadvertently accommodate and process structurally similar amino acids such as threonine, to avoid such errors, it has a 'posttransfer' editing activity that hydrolyzes mischarged Thr-tRNA(Val) in a tRNA-dependent manner. This is Valine--tRNA ligase from Methanococcus maripaludis (strain DSM 14266 / JCM 13030 / NBRC 101832 / S2 / LL).